The following is a 288-amino-acid chain: Bifunctional protein FolD 2 (288 aa).

Residues 166-168 (GRS) and Ser-191 each bind NADP(+).

It belongs to the tetrahydrofolate dehydrogenase/cyclohydrolase family. Homodimer.

It carries out the reaction (6R)-5,10-methylene-5,6,7,8-tetrahydrofolate + NADP(+) = (6R)-5,10-methenyltetrahydrofolate + NADPH. It catalyses the reaction (6R)-5,10-methenyltetrahydrofolate + H2O = (6R)-10-formyltetrahydrofolate + H(+). It participates in one-carbon metabolism; tetrahydrofolate interconversion. In terms of biological role, catalyzes the oxidation of 5,10-methylenetetrahydrofolate to 5,10-methenyltetrahydrofolate and then the hydrolysis of 5,10-methenyltetrahydrofolate to 10-formyltetrahydrofolate. The sequence is that of Bifunctional protein FolD 2 from Frankia casuarinae (strain DSM 45818 / CECT 9043 / HFP020203 / CcI3).